The primary structure comprises 906 residues: Alanine--tRNA ligase (906 aa).

4 residues coordinate Zn(2+): H600, H604, C703, and H707.

Belongs to the class-II aminoacyl-tRNA synthetase family. In terms of assembly, homodimer. It depends on Zn(2+) as a cofactor.

It is found in the cytoplasm. It catalyses the reaction tRNA(Ala) + L-alanine + ATP = L-alanyl-tRNA(Ala) + AMP + diphosphate. In terms of biological role, catalyzes the attachment of alanine to tRNA(Ala) in a two-step reaction: alanine is first activated by ATP to form Ala-AMP and then transferred to the acceptor end of tRNA(Ala). Incorrectly charged aminoacyl-tRNA(Ala) is also edited in situ by the editing domain. The polypeptide is Alanine--tRNA ligase (alaS) (Archaeoglobus fulgidus (strain ATCC 49558 / DSM 4304 / JCM 9628 / NBRC 100126 / VC-16)).